A 438-amino-acid chain; its full sequence is Glycogen synthase (438 aa).

Lysine 16 provides a ligand contact to ADP-alpha-D-glucose.

This sequence belongs to the glycosyltransferase 1 family. Bacterial/plant glycogen synthase subfamily.

The catalysed reaction is [(1-&gt;4)-alpha-D-glucosyl](n) + ADP-alpha-D-glucose = [(1-&gt;4)-alpha-D-glucosyl](n+1) + ADP + H(+). It participates in glycan biosynthesis; glycogen biosynthesis. Synthesizes alpha-1,4-glucan chains using ADP-glucose. This is Glycogen synthase from Thermus caldophilus.